The following is a 445-amino-acid chain: Arabinooligosaccharide-binding protein (445 aa).

Residues 1–20 (MGKNILFFSFVGVMVLVLVA) form the signal peptide. A lipid anchor (N-palmitoyl cysteine) is attached at Cys21. Residue Cys21 is the site of S-diacylglycerol cysteine attachment.

Belongs to the bacterial solute-binding protein 1 family. In terms of assembly, the complex is composed of two ATP-binding proteins (MsmX), two transmembrane proteins (AraP and AraQ) and a solute-binding protein (AraN).

The protein resides in the cell membrane. Functionally, part of the ABC transporter complex AraNPQ involved in the uptake of arabinooligosaccharides. AraN captures the substrate and delivers it to the two transmembrane components. The chain is Arabinooligosaccharide-binding protein (araN) from Halalkalibacterium halodurans (strain ATCC BAA-125 / DSM 18197 / FERM 7344 / JCM 9153 / C-125) (Bacillus halodurans).